The primary structure comprises 37 residues: Large ribosomal subunit protein bL36 (37 aa).

It belongs to the bacterial ribosomal protein bL36 family.

This chain is Large ribosomal subunit protein bL36, found in Heliobacterium modesticaldum (strain ATCC 51547 / Ice1).